The chain runs to 294 residues: Universal stress protein MSMEG_3950/MSMEI_3859 (294 aa).

Gly-13 provides a ligand contact to ATP. Residue Lys-109 forms an Isoglutamyl lysine isopeptide (Lys-Gln) (interchain with Q-Cter in protein Pup) linkage. Residues 117 to 123 (GNRGMGA), 131 to 132 (ST), Gly-164, Asp-197, 261 to 267 (GSHGRGG), and 275 to 277 (SVS) each bind ATP.

It belongs to the universal stress protein A family.

This chain is Universal stress protein MSMEG_3950/MSMEI_3859, found in Mycolicibacterium smegmatis (strain ATCC 700084 / mc(2)155) (Mycobacterium smegmatis).